We begin with the raw amino-acid sequence, 316 residues long: Beta-galactosidase small subunit (316 aa).

This sequence belongs to the bacterial beta-galactosidase small subunit family. In terms of assembly, heterodimer of a large (LacL) and a small subunit (LacM).

The enzyme catalyses Hydrolysis of terminal non-reducing beta-D-galactose residues in beta-D-galactosides.. Functionally, component of a beta-galactosidase. The sequence is that of Beta-galactosidase small subunit (lacM) from Lactobacillus acidophilus (strain ATCC 700396 / NCK56 / N2 / NCFM).